The sequence spans 99 residues: Small integral membrane protein 14 (99 aa).

Over 1–49 (MAEGGFDPCECVCSHEHAMRRLINLLRQSQSYCTDTECLRELPGPSSDS) the chain is Lumenal. A helical membrane pass occupies residues 50 to 70 (GISITVILMAWMVIAMLLFLL). The Cytoplasmic segment spans residues 71–99 (RPPNLRGSSLPGKPSSPHSGQDPPAPPVD). Residues 77–99 (GSSLPGKPSSPHSGQDPPAPPVD) are disordered.

In terms of tissue distribution, ubiquitously expressed.

The protein resides in the endoplasmic reticulum membrane. This is Small integral membrane protein 14 (Smim14) from Mus musculus (Mouse).